Reading from the N-terminus, the 518-residue chain is Protein nucleotidyltransferase YdiU (518 aa).

Glycine 99, glycine 101, arginine 102, lysine 122, aspartate 134, glycine 135, arginine 192, and arginine 199 together coordinate ATP. Aspartate 270 acts as the Proton acceptor in catalysis. Residues asparagine 271 and aspartate 280 each coordinate Mg(2+). Aspartate 280 lines the ATP pocket.

The protein belongs to the SELO family. Requires Mg(2+) as cofactor. Mn(2+) serves as cofactor.

The catalysed reaction is L-seryl-[protein] + ATP = 3-O-(5'-adenylyl)-L-seryl-[protein] + diphosphate. It carries out the reaction L-threonyl-[protein] + ATP = 3-O-(5'-adenylyl)-L-threonyl-[protein] + diphosphate. It catalyses the reaction L-tyrosyl-[protein] + ATP = O-(5'-adenylyl)-L-tyrosyl-[protein] + diphosphate. The enzyme catalyses L-histidyl-[protein] + UTP = N(tele)-(5'-uridylyl)-L-histidyl-[protein] + diphosphate. The catalysed reaction is L-seryl-[protein] + UTP = O-(5'-uridylyl)-L-seryl-[protein] + diphosphate. It carries out the reaction L-tyrosyl-[protein] + UTP = O-(5'-uridylyl)-L-tyrosyl-[protein] + diphosphate. In terms of biological role, nucleotidyltransferase involved in the post-translational modification of proteins. It can catalyze the addition of adenosine monophosphate (AMP) or uridine monophosphate (UMP) to a protein, resulting in modifications known as AMPylation and UMPylation. The chain is Protein nucleotidyltransferase YdiU from Methylobacillus flagellatus (strain ATCC 51484 / DSM 6875 / VKM B-1610 / KT).